A 442-amino-acid polypeptide reads, in one-letter code: Elongation factor 1-gamma (442 aa).

In terms of domain architecture, GST N-terminal spans 2–87 (AAGTLYTYPE…FLSNDALRGS (86 aa)). In terms of domain architecture, GST C-terminal spans 88–216 (TPQASAQVLQ…VKLCEKMAQF (129 aa)). 2 stretches are compositionally biased toward basic and acidic residues: residues 224-242 (MQPK…KEGG) and 249-263 (QEKK…KAAP). A disordered region spans residues 224–273 (MQPKKEAPAKKEKAGKEGGKQQQPQQEKKEKKKEEKKAAPAEEEMDECEA). Residues 281-442 (AKDPYAHLPK…KSFNQGKIFK (162 aa)) enclose the EF-1-gamma C-terminal domain.

As to quaternary structure, EF-1 is composed of four subunits: alpha, beta, delta, and gamma.

In terms of biological role, probably plays a role in anchoring the complex to other cellular components. The chain is Elongation factor 1-gamma (eef1g) from Carassius auratus (Goldfish).